We begin with the raw amino-acid sequence, 147 residues long: Hemoglobin subunit beta-1 (147 aa).

The region spanning 3–147 is the Globin domain; it reads EWTATERTHI…VVSALGRQYH (145 aa). The heme b site is built by histidine 64 and histidine 93.

Belongs to the globin family. In terms of assembly, hb 1 is a heterotetramer of two alpha-1 and two beta-1 chains. Hb 2 is a heterotetramer of two alpha-2 and two beta-1 chains. In terms of tissue distribution, red blood cells.

Involved in oxygen transport from gills to the various peripheral tissues. The polypeptide is Hemoglobin subunit beta-1 (hbb1) (Boreogadus saida (Polar cod)).